A 130-amino-acid chain; its full sequence is Large ribosomal subunit protein eL32 (130 aa).

The residue at position 40 (S40) is a Phosphoserine.

It belongs to the eukaryotic ribosomal protein eL32 family. Component of the large ribosomal subunit (LSU). Mature yeast ribosomes consist of a small (40S) and a large (60S) subunit. The 40S small subunit contains 1 molecule of ribosomal RNA (18S rRNA) and 33 different proteins (encoded by 57 genes). The large 60S subunit contains 3 rRNA molecules (25S, 5.8S and 5S rRNA) and 46 different proteins (encoded by 81 genes).

Its subcellular location is the cytoplasm. Functionally, component of the ribosome, a large ribonucleoprotein complex responsible for the synthesis of proteins in the cell. The small ribosomal subunit (SSU) binds messenger RNAs (mRNAs) and translates the encoded message by selecting cognate aminoacyl-transfer RNA (tRNA) molecules. The large subunit (LSU) contains the ribosomal catalytic site termed the peptidyl transferase center (PTC), which catalyzes the formation of peptide bonds, thereby polymerizing the amino acids delivered by tRNAs into a polypeptide chain. The nascent polypeptides leave the ribosome through a tunnel in the LSU and interact with protein factors that function in enzymatic processing, targeting, and the membrane insertion of nascent chains at the exit of the ribosomal tunnel. The protein is Large ribosomal subunit protein eL32 of Saccharomyces cerevisiae (strain ATCC 204508 / S288c) (Baker's yeast).